Here is a 464-residue protein sequence, read N- to C-terminus: 17,18-epoxy-17-hydroxycur-19-ene N-malonyltransferase (464 aa).

Active-site proton acceptor residues include His191 and Asp403.

It belongs to the plant acyltransferase family. In terms of assembly, monomer. In terms of tissue distribution, mainly expressed in roots.

It is found in the cytoplasm. The enzyme catalyses 17,18-epoxy-17-hydroxycur-19-ene + malonyl-CoA = prestrychnine + CoA. It participates in alkaloid biosynthesis. In terms of biological role, malonylransferase involved in the biosynthesis of curare monoterpene indole alkaloids (MIAs), natural products such as strychnine, a neurotoxic compound used as a pesticide to control rodents, and its pharmacologically active derivatives, including brucine, used to regulate blood pressure. Curare alkaloids act as animal glycine receptor antagonists. Catalyzes the conversion of 17,18-epoxy-17-hydroxycur-19-ene (Wieland-Gumlich aldehyde) to prestrychnine, which is spontaneously converted into strychnine and isostrychnine. The chain is 17,18-epoxy-17-hydroxycur-19-ene N-malonyltransferase from Strychnos nux-vomica (Poison nut).